A 749-amino-acid polypeptide reads, in one-letter code: MVLPTVLILLLSWAAGLGGQYGNPLNKYIRHYEGLSYNVDSLHQKHQRAKRAVSHEDQFLLLDFHAHGRQFNLRMKRDTSLFSDEFKVETSNKVLDYDTSHIYTGHIYGEEGSFSHGSVVDGRFEGFIQTRGGTFYIEPAERYIKDRILPFHSVIYHEDDINYPHKYGPQGGCADHSVFERMRKYQMTGVEEGTRAHSEEHAASMGPELLRKKRTTLAERNTCQLYIQTDHLFFKYYGTREAVIAQISSHVKAIDTIYQTTDFSGIRNISFMVKRIRINTTSDEKDPTNPFRFPNIGVEKFLELNSEQNHDDYCLAYVFTDRDFDDGVLGLAWVGAPSGSSGGICEKSKLYSDGKKKSLNTGIITVQNYGSHVPPKVSHITFAHEVGHNFGSPHDSGTECTPGESKNLGQKENGNYIMYARATSGDKLNNNKFSLCSIRNISQVLEKKRNNCFVESGQPICGNGMVEQGEECDCGYSDQCKDECCFDANQPEGKKCKLKPGKQCSPSQGPCCTAQCAFKSKSEKCRDDSDCAKEGICNGFTALCPASDPKPNFTDCNRHTQVCINGQCAGSICEKYDLEECTCASSDGKDDKELCHVCCMKKMAPSTCASTGSLQWNKQFNGRTITLQPGSPCNDFRGYCDVFMRCRLVDADGPLARLKKAIFSPQLYENIAEWIVAHWWAVLLMGIALIMLMAGFIKICSVHTPSSNPKLPPPKPLPGTLKRRRPPQPIQQPPRQRPRESYQMGHMRR.

The signal sequence occupies residues 1-18; the sequence is MVLPTVLILLLSWAAGLG. Positions 19 to 214 are excised as a propeptide; sequence GQYGNPLNKY…MGPELLRKKR (196 aa). A Cysteine switch motif is present at residues 171–178; the sequence is GGCADHSV. Cys-173 provides a ligand contact to Zn(2+). Over 215-673 the chain is Extracellular; it reads TTLAERNTCQ…SPQLYENIAE (459 aa). Positions 221–457 constitute a Peptidase M12B domain; that stretch reads NTCQLYIQTD…KRNNCFVESG (237 aa). Cystine bridges form between Cys-223–Cys-314, Cys-345–Cys-452, Cys-400–Cys-436, Cys-461–Cys-496, Cys-472–Cys-485, Cys-474–Cys-480, Cys-484–Cys-516, Cys-504–Cys-512, Cys-511–Cys-537, Cys-525–Cys-544, Cys-531–Cys-563, Cys-556–Cys-568, Cys-573–Cys-599, Cys-581–Cys-608, Cys-583–Cys-598, Cys-595–Cys-640, and Cys-633–Cys-646. Asn-268 and Asn-279 each carry an N-linked (GlcNAc...) asparagine glycan. His-384 contacts Zn(2+). Glu-385 is a catalytic residue. Zn(2+) is bound by residues His-388 and His-394. Residue Asn-440 is glycosylated (N-linked (GlcNAc...) asparagine). Positions 458–552 constitute a Disintegrin domain; the sequence is QPICGNGMVE…LCPASDPKPN (95 aa). Asn-552 is a glycosylation site (N-linked (GlcNAc...) asparagine). The helical transmembrane segment at 674–697 threads the bilayer; the sequence is WIVAHWWAVLLMGIALIMLMAGFI. Residues 698–749 are Cytoplasmic-facing; that stretch reads KICSVHTPSSNPKLPPPKPLPGTLKRRRPPQPIQQPPRQRPRESYQMGHMRR. A disordered region spans residues 705 to 749; sequence PSSNPKLPPPKPLPGTLKRRRPPQPIQQPPRQRPRESYQMGHMRR. The SH3-binding signature appears at 709–716; that stretch reads PKLPPPKP. Position 720 is a phosphothreonine (Thr-720). An SH3-binding motif is present at residues 723–729; sequence RRRPPQP. Positions 735 to 749 are interaction with AP2A1, AP2A2 and AP2M1; the sequence is RQRPRESYQMGHMRR.

Forms a ternary EFNA5-EPHA3-ADAM10 complex mediating EFNA5 extracellular domain shedding by ADAM10 which regulates the EFNA5-EPHA3 complex internalization and function, the cleavage occurs in trans, with ADAM10 and its substrate being on the membranes of opposing cells. Interacts with the clathrin adapter AP2 complex subunits AP2A1, AP2A2, AP2B1, and AP2M1; this interaction facilitates ADAM10 endocytosis from the plasma membrane during long-term potentiation in hippocampal neurons. Forms a ternary complex composed of ADAM10, EPHA4 and CADH1; within the complex, ADAM10 cleaves CADH1 which disrupts adherens junctions. Interacts with EPHA2. Interacts with NGF in a divalent cation-dependent manner. Interacts with TSPAN14; the interaction promotes ADAM10 maturation and cell surface expression. Interacts with TSPAN5, TSPAN10, TSPAN14, TSPAN15, TSPAN17 and TSPAN33; these interactions regulate ADAM10 substrate specificity, endocytosis and turnover. Interacts (via extracellular domain) with TSPAN33 (via extracellular domain) and (via cytoplasmic domain) with AFDN; interaction with TSPAN33 allows the docking of ADAM10 to zonula adherens through a PDZ11-dependent interaction between TSPAN33 and PLEKHA7 while interaction with AFDN locks ADAM10 at zonula adherens. Interacts with DLG1; this interaction recruits ADAM10 to the cell membrane during long-term depression in hippocampal neurons. Interacts (via extracellular domain) with BACE1 (via extracellular domain). Interacts with FAM171A1. It depends on Zn(2+) as a cofactor. In terms of processing, the precursor is cleaved by furin and PCSK7. Expressed in brain, kidney, lung, spleen, ovary and testis.

Its subcellular location is the cell membrane. The protein resides in the golgi apparatus membrane. It localises to the cytoplasmic vesicle. The protein localises to the clathrin-coated vesicle. It is found in the cell projection. Its subcellular location is the axon. The protein resides in the dendrite. It localises to the cell junction. The protein localises to the adherens junction. It is found in the cytoplasm. The catalysed reaction is Endopeptidase of broad specificity.. Its activity is regulated as follows. Catalytically inactive when the propeptide is intact and associated with the mature enzyme. The disintegrin and cysteine-rich regions modulate access of substrates to exerts an inhibitory effect on the cleavage of ADAM10 substrates. Transmembrane metalloprotease which mediates the ectodomain shedding of a myriad of transmembrane proteins, including adhesion proteins, growth factor precursors and cytokines being essential for development and tissue homeostasis. Associates with six members of the tetraspanin superfamily TspanC8 which regulate its exit from the endoplasmic reticulum and its substrate selectivity. Cleaves the membrane-bound precursor of TNF-alpha at '76-Ala-|-Val-77' to its mature soluble form. Responsible for the proteolytical release of soluble JAM3 from endothelial cells surface. Responsible for the proteolytic release of several other cell-surface proteins, including heparin-binding epidermal growth-like factor, ephrin-A2, CD44, CDH2 and for constitutive and regulated alpha-secretase cleavage of amyloid precursor protein (APP). Contributes to the normal cleavage of the cellular prion protein. Involved in the cleavage of the adhesion molecule L1 at the cell surface and in released membrane vesicles, suggesting a vesicle-based protease activity. Also controls the proteolytic processing of Notch and mediates lateral inhibition during neurogenesis. Required for the development of type 1 transitional B cells into marginal zone B cells, probably by cleaving Notch. Responsible for the FasL ectodomain shedding and for the generation of the remnant ADAM10-processed FasL (FasL APL) transmembrane form. Also cleaves the ectodomain of the integral membrane proteins CORIN and ITM2B. Mediates the proteolytic cleavage of LAG3, leading to release the secreted form of LAG3. Mediates the proteolytic cleavage of IL6R and IL11RA, leading to the release of secreted forms of IL6R and IL11RA. Enhances the cleavage of CHL1 by BACE1. Cleaves NRCAM. Cleaves TREM2, resulting in shedding of the TREM2 ectodomain. Involved in the development and maturation of glomerular and coronary vasculature. During development of the cochlear organ of Corti, promotes pillar cell separation by forming a ternary complex with CADH1 and EPHA4 and cleaving CADH1 at adherens junctions. May regulate the EFNA5-EPHA3 signaling. Regulates leukocyte transmigration as a sheddase for the adherens junction protein VE-cadherin/CDH5 in endothelial cells. This Rattus norvegicus (Rat) protein is Disintegrin and metalloproteinase domain-containing protein 10 (Adam10).